A 230-amino-acid polypeptide reads, in one-letter code: uncharacterized protein (230 aa).

The span at 1-11 (MPVPSVTVTTD) shows a compositional bias: polar residues. The tract at residues 1-88 (MPVPSVTVTT…TLKRPTSNSI (88 aa)) is disordered. Over residues 63 to 73 (DDQHRHSDVHS) the composition is skewed to basic and acidic residues. Residues 79-88 (TLKRPTSNSI) show a composition bias toward polar residues. Ser106 carries the phosphoserine modification. Over residues 156-179 (LKREDSRVSSTKKEHINDHTDMHS) the composition is skewed to basic and acidic residues. The tract at residues 156–203 (LKREDSRVSSTKKEHINDHTDMHSTRSKVTTNSQGSSLEPNKLNMAVE) is disordered. Polar residues predominate over residues 182 to 194 (SKVTTNSQGSSLE).

This is an uncharacterized protein from Saccharomyces cerevisiae (strain ATCC 204508 / S288c) (Baker's yeast).